Reading from the N-terminus, the 71-residue chain is Plasticin-C1 (71 aa).

A signal peptide spans 1–22; it reads MAFLKKSLLLVLFLGLVSLSIC. The propeptide occupies 23–45; that stretch reads EEEKRENEDEEKQEDDDQSENKR. Residues 25–46 are disordered; the sequence is EKRENEDEEKQEDDDQSENKRG. Residues 30 to 40 are compositionally biased toward acidic residues; it reads EDEEKQEDDDQ. At Asn-68 the chain carries Asparagine amide. The propeptide occupies 70–71; sequence ES.

It belongs to the frog skin active peptide (FSAP) family. Plasticin subfamily. As to expression, expressed by the skin glands.

Its subcellular location is the secreted. The protein localises to the target cell membrane. Neutral peptide with no antimicrobial activity. May act in synergy with cationic peptides by enhancing their activity. Has a moderate hemolytic activity. The sequence is that of Plasticin-C1 from Agalychnis callidryas (Red-eyed tree frog).